Reading from the N-terminus, the 65-residue chain is Metallothionein-like protein 3B (65 aa).

The protein belongs to the metallothionein superfamily. Type 15 family.

Functionally, metallothioneins have a high content of cysteine residues that bind various heavy metals. This is Metallothionein-like protein 3B (MT3B) from Oryza sativa subsp. indica (Rice).